The chain runs to 99 residues: uncharacterized protein (99 aa).

Helical transmembrane passes span 7 to 29 (FFIS…YTLY), 39 to 61 (FISS…ARYN), and 68 to 90 (FCNL…LWLL).

The protein resides in the cell membrane. This is an uncharacterized protein from Archaeoglobus fulgidus (strain ATCC 49558 / DSM 4304 / JCM 9628 / NBRC 100126 / VC-16).